We begin with the raw amino-acid sequence, 255 residues long: Indole-3-glycerol phosphate synthase (255 aa).

Belongs to the TrpC family.

The catalysed reaction is 1-(2-carboxyphenylamino)-1-deoxy-D-ribulose 5-phosphate + H(+) = (1S,2R)-1-C-(indol-3-yl)glycerol 3-phosphate + CO2 + H2O. Its pathway is amino-acid biosynthesis; L-tryptophan biosynthesis; L-tryptophan from chorismate: step 4/5. This is Indole-3-glycerol phosphate synthase from Streptococcus pneumoniae serotype 19F (strain G54).